The primary structure comprises 836 residues: Translation initiation factor IF-2 (836 aa).

The segment at 1–233 (MSDTDGKKPL…RSLAAMKRKQ (233 aa)) is disordered. Polar residues predominate over residues 18-27 (SGQVKQSFSH). Low complexity predominate over residues 50-60 (SGSSTTTSSPS). The span at 88-156 (KLREVEDAKR…AARRAEEAKR (69 aa)) shows a compositional bias: basic and acidic residues. Residues 167 to 176 (PAESRASAPP) show a composition bias toward low complexity. The span at 185–206 (SRKEREREADRDRTTKKDDSRR) shows a compositional bias: basic and acidic residues. The 169-residue stretch at 333–501 (PRPPIITIMG…NIALQAEILD (169 aa)) folds into the tr-type G domain. The interval 342-349 (GHVDHGKT) is G1. 342–349 (GHVDHGKT) is a GTP binding site. A G2 region spans residues 367–371 (GITQH). The segment at 389–392 (DTPG) is G3. GTP contacts are provided by residues 389–393 (DTPGH) and 443–446 (NKID). The interval 443–446 (NKID) is G4. The G5 stretch occupies residues 479 to 481 (SAK).

Belongs to the TRAFAC class translation factor GTPase superfamily. Classic translation factor GTPase family. IF-2 subfamily.

It localises to the cytoplasm. Its function is as follows. One of the essential components for the initiation of protein synthesis. Protects formylmethionyl-tRNA from spontaneous hydrolysis and promotes its binding to the 30S ribosomal subunits. Also involved in the hydrolysis of GTP during the formation of the 70S ribosomal complex. The protein is Translation initiation factor IF-2 of Cereibacter sphaeroides (strain ATCC 17023 / DSM 158 / JCM 6121 / CCUG 31486 / LMG 2827 / NBRC 12203 / NCIMB 8253 / ATH 2.4.1.) (Rhodobacter sphaeroides).